Here is a 190-residue protein sequence, read N- to C-terminus: Crossover junction endodeoxyribonuclease RuvC (190 aa).

Residues aspartate 7, glutamate 67, and aspartate 140 contribute to the active site. Mg(2+)-binding residues include aspartate 7, glutamate 67, and aspartate 140.

This sequence belongs to the RuvC family. As to quaternary structure, homodimer which binds Holliday junction (HJ) DNA. The HJ becomes 2-fold symmetrical on binding to RuvC with unstacked arms; it has a different conformation from HJ DNA in complex with RuvA. In the full resolvosome a probable DNA-RuvA(4)-RuvB(12)-RuvC(2) complex forms which resolves the HJ. Mg(2+) is required as a cofactor.

The protein localises to the cytoplasm. It carries out the reaction Endonucleolytic cleavage at a junction such as a reciprocal single-stranded crossover between two homologous DNA duplexes (Holliday junction).. Functionally, the RuvA-RuvB-RuvC complex processes Holliday junction (HJ) DNA during genetic recombination and DNA repair. Endonuclease that resolves HJ intermediates. Cleaves cruciform DNA by making single-stranded nicks across the HJ at symmetrical positions within the homologous arms, yielding a 5'-phosphate and a 3'-hydroxyl group; requires a central core of homology in the junction. The consensus cleavage sequence is 5'-(A/T)TT(C/G)-3'. Cleavage occurs on the 3'-side of the TT dinucleotide at the point of strand exchange. HJ branch migration catalyzed by RuvA-RuvB allows RuvC to scan DNA until it finds its consensus sequence, where it cleaves and resolves the cruciform DNA. This is Crossover junction endodeoxyribonuclease RuvC from Fusobacterium nucleatum subsp. nucleatum (strain ATCC 25586 / DSM 15643 / BCRC 10681 / CIP 101130 / JCM 8532 / KCTC 2640 / LMG 13131 / VPI 4355).